We begin with the raw amino-acid sequence, 87 residues long: Large ribosomal subunit protein bL31B (87 aa).

Belongs to the bacterial ribosomal protein bL31 family. Type B subfamily. As to quaternary structure, part of the 50S ribosomal subunit.

The sequence is that of Large ribosomal subunit protein bL31B from Burkholderia vietnamiensis (strain G4 / LMG 22486) (Burkholderia cepacia (strain R1808)).